Reading from the N-terminus, the 177-residue chain is Large ribosomal subunit protein uL6 (177 aa).

Belongs to the universal ribosomal protein uL6 family. Part of the 50S ribosomal subunit.

In terms of biological role, this protein binds to the 23S rRNA, and is important in its secondary structure. It is located near the subunit interface in the base of the L7/L12 stalk, and near the tRNA binding site of the peptidyltransferase center. The protein is Large ribosomal subunit protein uL6 of Marinomonas sp. (strain MWYL1).